A 345-amino-acid chain; its full sequence is Phosphoribosylformylglycinamidine cyclo-ligase (345 aa).

It belongs to the AIR synthase family.

It localises to the cytoplasm. The enzyme catalyses 2-formamido-N(1)-(5-O-phospho-beta-D-ribosyl)acetamidine + ATP = 5-amino-1-(5-phospho-beta-D-ribosyl)imidazole + ADP + phosphate + H(+). Its pathway is purine metabolism; IMP biosynthesis via de novo pathway; 5-amino-1-(5-phospho-D-ribosyl)imidazole from N(2)-formyl-N(1)-(5-phospho-D-ribosyl)glycinamide: step 2/2. In Escherichia coli O6:K15:H31 (strain 536 / UPEC), this protein is Phosphoribosylformylglycinamidine cyclo-ligase.